A 159-amino-acid polypeptide reads, in one-letter code: 2-C-methyl-D-erythritol 2,4-cyclodiphosphate synthase (159 aa).

A divalent metal cation contacts are provided by D8 and H10. 4-CDP-2-C-methyl-D-erythritol 2-phosphate-binding positions include 8-10 (DVH) and 34-35 (HS). A divalent metal cation is bound at residue H42. Residues 56–58 (DIG), 61–65 (FPDTD), 100–106 (AQAPKMA), 132–135 (TTTE), F139, and R142 each bind 4-CDP-2-C-methyl-D-erythritol 2-phosphate.

It belongs to the IspF family. Homotrimer. Requires a divalent metal cation as cofactor.

The catalysed reaction is 4-CDP-2-C-methyl-D-erythritol 2-phosphate = 2-C-methyl-D-erythritol 2,4-cyclic diphosphate + CMP. The protein operates within isoprenoid biosynthesis; isopentenyl diphosphate biosynthesis via DXP pathway; isopentenyl diphosphate from 1-deoxy-D-xylulose 5-phosphate: step 4/6. In terms of biological role, involved in the biosynthesis of isopentenyl diphosphate (IPP) and dimethylallyl diphosphate (DMAPP), two major building blocks of isoprenoid compounds. Catalyzes the conversion of 4-diphosphocytidyl-2-C-methyl-D-erythritol 2-phosphate (CDP-ME2P) to 2-C-methyl-D-erythritol 2,4-cyclodiphosphate (ME-CPP) with a corresponding release of cytidine 5-monophosphate (CMP). The protein is 2-C-methyl-D-erythritol 2,4-cyclodiphosphate synthase of Cronobacter sakazakii (strain ATCC BAA-894) (Enterobacter sakazakii).